The primary structure comprises 363 residues: GDP-fucose transporter (363 aa).

The next 8 helical transmembrane spans lie at 30–47 (VITAVSAYWVFSIGLVFL), 62–79 (FITWYQCLVTVFLCLFLS), 126–148 (VSFYYVGRSLTTVFNVVCTYLIL), 152–171 (TSGQAIGCCALIIFGFLLGV), 180–202 (LSYTGVIFGVLASLSVALNAIYT), 222–244 (LNALVLFLPLMLFNGEFGAVFYF), 251–273 (TFWILMTLGGVFGFMMGYVTGWQ), and 307–326 (LLWWTSNFVVLFGSGMYTYV). Residues 334–363 (KNSGASPASEAKSDKVKLLGRDGNAAEESV) form a disordered region. Residues 344–353 (AKSDKVKLLG) show a composition bias toward basic and acidic residues.

The protein belongs to the TPT transporter family. SLC35C subfamily.

The protein resides in the golgi apparatus membrane. Involved in GDP-fucose import from the cytoplasm into the Golgi lumen. The protein is GDP-fucose transporter of Caenorhabditis elegans.